Here is a 541-residue protein sequence, read N- to C-terminus: uncharacterized protein (541 aa).

The N-terminal stretch at 1-22 (MQFKYGALIFSGFLGLSIVLAS) is a signal peptide. Cys-23 carries the N-palmitoyl cysteine lipid modification. The S-diacylglycerol cysteine moiety is linked to residue Cys-23. 2 disordered regions span residues 446–468 (APGQ…NGNL) and 480–514 (KTKT…TENQ). Positions 448–460 (GQSSQKEGGQQQS) are enriched in low complexity. Over residues 480–490 (KTKTEVKKTED) the composition is skewed to basic and acidic residues.

It belongs to the MG185/MG260 family.

The protein localises to the cell membrane. This is an uncharacterized protein from Mycoplasma pneumoniae (strain ATCC 29342 / M129 / Subtype 1) (Mycoplasmoides pneumoniae).